The primary structure comprises 291 residues: MIPIQLTVFFMIIYVLESLTIIVQSSLIVAVLGREWLQVRRLMPVDMILISLGISRFCLQWASMLNNFCSYFNLNYVLCNLTITWEFFNILTFWLNSLLTVFYCIKVSSFTHHIFLWLRWRILRLFPWILLGSLMITCVTIIPSAIGNYIQIQLLTMEHLPRNSTVTDKLENFHQYQFQAHTVALVIPFILFLASTIFLMASLTKQIQHHSTGHCNPSMKARFTALRSLAVLFIVFTSYFLTILITIIGTLFDKRCWLWVWEAFVYAFILMHSTSLMLSSPTLKRILKGKC.

M1 is a topological domain (extracellular). Residues 2-22 (IPIQLTVFFMIIYVLESLTII) traverse the membrane as a helical segment. Residues 23–41 (VQSSLIVAVLGREWLQVRR) are Cytoplasmic-facing. A helical membrane pass occupies residues 42-62 (LMPVDMILISLGISRFCLQWA). The Extracellular portion of the chain corresponds to 63 to 84 (SMLNNFCSYFNLNYVLCNLTIT). N-linked (GlcNAc...) asparagine glycosylation occurs at N80. A helical transmembrane segment spans residues 85 to 105 (WEFFNILTFWLNSLLTVFYCI). The Cytoplasmic portion of the chain corresponds to 106–125 (KVSSFTHHIFLWLRWRILRL). A helical membrane pass occupies residues 126-146 (FPWILLGSLMITCVTIIPSAI). Topologically, residues 147–182 (GNYIQIQLLTMEHLPRNSTVTDKLENFHQYQFQAHT) are extracellular. N163 carries an N-linked (GlcNAc...) asparagine glycan. A helical transmembrane segment spans residues 183–203 (VALVIPFILFLASTIFLMASL). At 204 to 228 (TKQIQHHSTGHCNPSMKARFTALRS) the chain is on the cytoplasmic side. The chain crosses the membrane as a helical span at residues 229-249 (LAVLFIVFTSYFLTILITIIG). The Extracellular portion of the chain corresponds to 250–257 (TLFDKRCW). A helical transmembrane segment spans residues 258–278 (LWVWEAFVYAFILMHSTSLML). Over 279–291 (SSPTLKRILKGKC) the chain is Cytoplasmic.

The protein belongs to the G-protein coupled receptor T2R family. As to quaternary structure, interacts with RTP3 and RTP4. In terms of tissue distribution, expressed in a subset of gustducin-positive taste receptor cells of the tongue. Expressed in circumvallate papillae and testis.

It localises to the cell membrane. In terms of biological role, gustducin-coupled receptor implicated in the perception of bitter compounds in the oral cavity and the gastrointestinal tract. Signals through PLCB2 and the calcium-regulated cation channel TRPM5. The polypeptide is Taste receptor type 2 member 16 (TAS2R16) (Homo sapiens (Human)).